Here is a 251-residue protein sequence, read N- to C-terminus: Precorrin-4 C(11)-methyltransferase (251 aa).

Belongs to the precorrin methyltransferase family.

The catalysed reaction is precorrin-4 + S-adenosyl-L-methionine = precorrin-5 + S-adenosyl-L-homocysteine. It participates in cofactor biosynthesis; adenosylcobalamin biosynthesis; cob(II)yrinate a,c-diamide from precorrin-2 (aerobic route): step 4/10. Its function is as follows. Catalyzes the methylation of C-11 in precorrin-4 to form precorrin-5. The protein is Precorrin-4 C(11)-methyltransferase (cobM) of Mycobacterium tuberculosis (strain CDC 1551 / Oshkosh).